A 168-amino-acid polypeptide reads, in one-letter code: Large ribosomal subunit protein uL29c (168 aa).

Residues 1–20 are disordered; that stretch reads MLAIHSLSSTPCSSGLTSPP. Residues 1 to 58 constitute a chloroplast transit peptide; it reads MLAIHSLSSTPCSSGLTSPPKSTLLTKSSFHGLRLPSVNLSSSLRLRVQTPPSSVVVM.

Component of the chloroplast large ribosomal subunit (LSU). Mature 70S chloroplast ribosomes of higher plants consist of a small (30S) and a large (50S) subunit. The 30S small subunit contains 1 molecule of ribosomal RNA (16S rRNA) and 24 different proteins. The 50S large subunit contains 3 rRNA molecules (23S, 5S and 4.5S rRNA) and 33 different proteins.

Its subcellular location is the plastid. The protein resides in the chloroplast. In terms of biological role, component of the chloroplast ribosome (chloro-ribosome), a dedicated translation machinery responsible for the synthesis of chloroplast genome-encoded proteins, including proteins of the transcription and translation machinery and components of the photosynthetic apparatus. This chain is Large ribosomal subunit protein uL29c (RPL29), found in Spinacia oleracea (Spinach).